Consider the following 84-residue polypeptide: Small ribosomal subunit protein uS17 (84 aa).

This sequence belongs to the universal ribosomal protein uS17 family. In terms of assembly, part of the 30S ribosomal subunit.

Its function is as follows. One of the primary rRNA binding proteins, it binds specifically to the 5'-end of 16S ribosomal RNA. The chain is Small ribosomal subunit protein uS17 from Legionella pneumophila (strain Paris).